A 196-amino-acid polypeptide reads, in one-letter code: dTDP-4-dehydro-6-deoxyglucose 3-epimerase (196 aa).

Substrate is bound by residues Arg-21, Glu-26, 45-47 (QVN), and Arg-57. His-60 functions as the Proton acceptor in the catalytic mechanism. Substrate-binding residues include Lys-70 and Arg-117. The active-site Proton donor is Tyr-130. Substrate is bound by residues Glu-141 and Arg-166.

It belongs to the dTDP-4-dehydrorhamnose 3,5-epimerase family. In terms of assembly, homodimer.

The catalysed reaction is dTDP-4-dehydro-6-deoxy-alpha-D-glucose = dTDP-4-dehydro-6-deoxy-alpha-D-allose. The protein operates within antibiotic biosynthesis. Involved in the biosynthesis of dTDP-6-deoxy-D-allose, an intermediate in the biosynthesis of mycinose, which is one of the two unusual sugars attached to the 16-membered macrolactone ring of the aglycone antibiotic dihydrochalcomycin (GERI-155). Catalyzes the conversion of dTDP-4-oxo-6-deoxyglucose to dTDP-4-oxo-6-deoxyallose, via a C-3 epimerization. The sequence is that of dTDP-4-dehydro-6-deoxyglucose 3-epimerase from Streptomyces sp.